A 194-amino-acid chain; its full sequence is Imidazoleglycerol-phosphate dehydratase (194 aa).

The protein belongs to the imidazoleglycerol-phosphate dehydratase family.

The protein localises to the cytoplasm. The enzyme catalyses D-erythro-1-(imidazol-4-yl)glycerol 3-phosphate = 3-(imidazol-4-yl)-2-oxopropyl phosphate + H2O. It participates in amino-acid biosynthesis; L-histidine biosynthesis; L-histidine from 5-phospho-alpha-D-ribose 1-diphosphate: step 6/9. The protein is Imidazoleglycerol-phosphate dehydratase of Halalkalibacterium halodurans (strain ATCC BAA-125 / DSM 18197 / FERM 7344 / JCM 9153 / C-125) (Bacillus halodurans).